A 327-amino-acid chain; its full sequence is Lipoyl synthase (327 aa).

Positions 75, 80, 86, 101, 105, 108, and 315 each coordinate [4Fe-4S] cluster. The 218-residue stretch at 87-304 folds into the Radical SAM core domain; it reads FGNGTATFMI…EEEAYKMGFS (218 aa).

It belongs to the radical SAM superfamily. Lipoyl synthase family. [4Fe-4S] cluster is required as a cofactor.

It is found in the cytoplasm. It catalyses the reaction [[Fe-S] cluster scaffold protein carrying a second [4Fe-4S](2+) cluster] + N(6)-octanoyl-L-lysyl-[protein] + 2 oxidized [2Fe-2S]-[ferredoxin] + 2 S-adenosyl-L-methionine + 4 H(+) = [[Fe-S] cluster scaffold protein] + N(6)-[(R)-dihydrolipoyl]-L-lysyl-[protein] + 4 Fe(3+) + 2 hydrogen sulfide + 2 5'-deoxyadenosine + 2 L-methionine + 2 reduced [2Fe-2S]-[ferredoxin]. The protein operates within protein modification; protein lipoylation via endogenous pathway; protein N(6)-(lipoyl)lysine from octanoyl-[acyl-carrier-protein]: step 2/2. In terms of biological role, catalyzes the radical-mediated insertion of two sulfur atoms into the C-6 and C-8 positions of the octanoyl moiety bound to the lipoyl domains of lipoate-dependent enzymes, thereby converting the octanoylated domains into lipoylated derivatives. The chain is Lipoyl synthase from Variovorax paradoxus (strain S110).